We begin with the raw amino-acid sequence, 258 residues long: Na(+)-translocating NADH-quinone reductase subunit C (258 aa).

The helical transmembrane segment at 14-34 threads the bilayer; the sequence is LIVVLAVSLICSVIVAGAVVG. FMN phosphoryl serine is present on Ser226.

It belongs to the NqrC family. As to quaternary structure, composed of six subunits; NqrA, NqrB, NqrC, NqrD, NqrE and NqrF. FMN is required as a cofactor.

It is found in the cell inner membrane. The catalysed reaction is a ubiquinone + n Na(+)(in) + NADH + H(+) = a ubiquinol + n Na(+)(out) + NAD(+). Its function is as follows. NQR complex catalyzes the reduction of ubiquinone-1 to ubiquinol by two successive reactions, coupled with the transport of Na(+) ions from the cytoplasm to the periplasm. NqrA to NqrE are probably involved in the second step, the conversion of ubisemiquinone to ubiquinol. The protein is Na(+)-translocating NADH-quinone reductase subunit C of Neisseria meningitidis serogroup B (strain ATCC BAA-335 / MC58).